Reading from the N-terminus, the 612-residue chain is Isocitrate dehydrogenase kinase/phosphatase (612 aa).

Residues alanine 327–leucine 333 and lysine 348 each bind ATP. The active site involves aspartate 383. The tract at residues alanine 593 to alanine 612 is disordered.

It belongs to the AceK family.

It is found in the cytoplasm. It catalyses the reaction L-seryl-[isocitrate dehydrogenase] + ATP = O-phospho-L-seryl-[isocitrate dehydrogenase] + ADP + H(+). Its function is as follows. Bifunctional enzyme which can phosphorylate or dephosphorylate isocitrate dehydrogenase (IDH) on a specific serine residue. This is a regulatory mechanism which enables bacteria to bypass the Krebs cycle via the glyoxylate shunt in response to the source of carbon. When bacteria are grown on glucose, IDH is fully active and unphosphorylated, but when grown on acetate or ethanol, the activity of IDH declines drastically concomitant with its phosphorylation. This chain is Isocitrate dehydrogenase kinase/phosphatase, found in Paraburkholderia xenovorans (strain LB400).